The sequence spans 877 residues: DNA (cytosine-5)-methyltransferase 3A (877 aa).

3 disordered regions span residues 1–154 (MVES…MQRH), 194–250 (EETP…PEYE), and 412–431 (AYAP…EKPK). Basic and acidic residues-rich tracts occupy residues 107–133 (KLLE…EGSR) and 195–206 (ETPRAEPQKEEE). A compositionally biased stretch (polar residues) spans 210–225 (PASQQPTDPASPNVAT). One can recognise a PWWP domain in the interval 226-284 (TPEPVVADAVDKNTSKSADDEPEYEDGRGLGIGELVWGKLRGFSWWPGRIVSWWMTGRS). Basic and acidic residues predominate over residues 234–244 (AVDKNTSKSAD). The ADD domain maps to 447–579 (EVRQKCRNIE…LQMFFANNHD (133 aa)). The GATA-type; atypical zinc finger occupies 458–488 (ICISCGSLNVTLEHPLFIGGMCQNCKNCFLE). A PHD-type; atypical zinc finger spans residues 499–555 (QSYCTICCGGREVLMCGNNNCCRCFCVECVDLLVGPGAAQAAIKEDPWNCYMCGHKG). The 279-residue stretch at 599-877 (IRVLSLFDGI…APLKEYFACV (279 aa)) folds into the SAM-dependent MTase C5-type domain. Residues 606-610 (DGIAT), Glu629, and 651-653 (DVR) contribute to the S-adenosyl-L-methionine site. Residue Cys675 is part of the active site. Position 856–858 (856–858 (RSW)) interacts with S-adenosyl-L-methionine.

The protein belongs to the class I-like SAM-binding methyltransferase superfamily. C5-methyltransferase family.

The protein resides in the nucleus. It is found in the chromosome. The protein localises to the cytoplasm. It catalyses the reaction a 2'-deoxycytidine in DNA + S-adenosyl-L-methionine = a 5-methyl-2'-deoxycytidine in DNA + S-adenosyl-L-homocysteine + H(+). The enzyme catalyses L-cysteinyl-[protein] + S-adenosyl-L-methionine = S-methyl-L-cysteinyl-[protein] + S-adenosyl-L-homocysteine + H(+). Functionally, required for genome-wide de novo methylation and is essential for development. DNA methylation is coordinated with methylation of histones. It modifies DNA in a non-processive manner and also methylates non-CpG sites. Acts as a transcriptional corepressor for ZNF238. Can actively repress transcription through the recruitment of HDAC activity. Also has weak auto-methylation activity on some Cys residue in absence of DNA. This chain is DNA (cytosine-5)-methyltransferase 3A (DNMT3A), found in Gallus gallus (Chicken).